The chain runs to 351 residues: MNFDKKNSFFSWINSKIKKNNKKEKKENILLKKEKEGIHTIQNIDNKKIDFLFKLKNSLNKTKQFFGDSISRIFLSKKIDDAFFEELEDTMLLSDIGVHTTDQIISKLINDATHKELKNPEKVYFLLKEHMYSILNRVEKPLKISNHTPFVILVVGINGTGKTTTVSKLAKKYKLAGKSVMLAAADTFRAAGIEQLQILGKRNNIPVISQSSGSDPASVAFDAVKSAISKKIDVLIIDTAGRLHNKLHLLEELKKMVRVIKKLNLSAPHEIMLIIDACNGQNTIKQTEMFHKAINLTGLVITKLDGTAKGGVIFSLANQFLIPIRYIGIGEKTTDLVVFNSNDFIKSIFVK.

GTP is bound by residues 156 to 163 (GINGTGKT), 238 to 242 (DTAGR), and 302 to 305 (TKLD).

It belongs to the GTP-binding SRP family. FtsY subfamily. In terms of assembly, part of the signal recognition particle protein translocation system, which is composed of SRP and FtsY. SRP is a ribonucleoprotein composed of Ffh and a 4.5S RNA molecule.

The protein resides in the cell membrane. Its subcellular location is the cytoplasm. It carries out the reaction GTP + H2O = GDP + phosphate + H(+). Functionally, involved in targeting and insertion of nascent membrane proteins into the cytoplasmic membrane. Acts as a receptor for the complex formed by the signal recognition particle (SRP) and the ribosome-nascent chain (RNC). Interaction with SRP-RNC leads to the transfer of the RNC complex to the Sec translocase for insertion into the membrane, the hydrolysis of GTP by both Ffh and FtsY, and the dissociation of the SRP-FtsY complex into the individual components. This Buchnera aphidicola subsp. Schizaphis graminum (strain Sg) protein is Signal recognition particle receptor FtsY.